The chain runs to 643 residues: Melanoma-associated antigen C3 (643 aa).

2 consecutive MAGE domains span residues 184-384 (LDEK…AAGM) and 456-643 (LDEK…FCPE). The tract at residues 347 to 421 (NPQGLAGHRQ…PQSPLDSCSS (75 aa)) is disordered. Basic and acidic residues predominate over residues 354 to 363 (HRQEDGRRGL). Residues 383-414 (GMPPLPQSPPEIPPQGPPKISPQGPPQSPPQS) show a composition bias toward pro residues. 3 positions are modified to phosphothreonine: Thr478, Thr484, and Thr485.

Expressed in testis. Not expressed in other normal tissues, but is expressed in tumors of different histological origins.

In Homo sapiens (Human), this protein is Melanoma-associated antigen C3 (MAGEC3).